The following is a 336-amino-acid chain: D-alanine--D-alanine ligase (336 aa).

The ATP-grasp domain occupies 124–330; it reads KMWFSALGIP…FTEYLSLVIK (207 aa). Residue 154-209 coordinates ATP; it reads ALENWGSIFVKAASQGSSVGCYKVDDSSKVAGVLKDAFGYAPYVIVEKTIKARELE. The Mg(2+) site is built by Asp284, Glu297, and Asn299.

The protein belongs to the D-alanine--D-alanine ligase family. The cofactor is Mg(2+). It depends on Mn(2+) as a cofactor.

It is found in the cytoplasm. The enzyme catalyses 2 D-alanine + ATP = D-alanyl-D-alanine + ADP + phosphate + H(+). The protein operates within cell wall biogenesis; peptidoglycan biosynthesis. Its function is as follows. Cell wall formation. The chain is D-alanine--D-alanine ligase from Shewanella sp. (strain MR-7).